The following is a 454-amino-acid chain: CBL-interacting protein kinase 4 (454 aa).

The 260-residue stretch at 25–284 (YELGRMLGRG…ESLAAHHPWF (260 aa)) folds into the Protein kinase domain. ATP contacts are provided by residues 31–39 (LGRGTFAKV) and Lys-54. The active-site Proton acceptor is the Asp-151. The tract at residues 169 to 198 (DFGLAALPDTLRDDGRLHTACGTPAYAAPE) is activation loop. In terms of domain architecture, NAF spans 311-335 (APPPPLNAFDIISMSPGLDLSGLFG). A PPI region spans residues 341–370 (LREKRFTTTASPEKTLEQLGLAGGKLGYVV).

It belongs to the protein kinase superfamily. CAMK Ser/Thr protein kinase family. SNF1 subfamily. Mn(2+) serves as cofactor.

It carries out the reaction L-seryl-[protein] + ATP = O-phospho-L-seryl-[protein] + ADP + H(+). The enzyme catalyses L-threonyl-[protein] + ATP = O-phospho-L-threonyl-[protein] + ADP + H(+). In terms of biological role, CIPK serine-threonine protein kinases interact with CBL proteins. Binding of a CBL protein to the regulatory NAF domain of CIPK protein lead to the activation of the kinase in a calcium-dependent manner. The chain is CBL-interacting protein kinase 4 (CIPK4) from Oryza sativa subsp. japonica (Rice).